The following is a 216-amino-acid chain: MGQKINPLGFRLGTTQSHDSIWFAQPTNYSENIQEDKKIRDCIKNYIQKNIRISSGVEGIGQIKIQKRIDLIQVIIYMGFPKLLIEGKSQKIEELQTNMQKKLNCVNRKLNIAIVKVANAYKHPNIIAEFIAGQLKNRVSFRKAMKKAIELTEQAGTKGVQVQIAGRIDGKEIARVEWIREGRVPLQTIRAKIDYCCYTVRTIYGVLGIKVWIFSK.

The 76-residue stretch at 43–118 (IKNYIQKNIR…KLNIAIVKVA (76 aa)) folds into the KH type-2 domain.

Belongs to the universal ribosomal protein uS3 family. In terms of assembly, part of the 30S ribosomal subunit.

Its subcellular location is the plastid. The protein resides in the chloroplast. The chain is Small ribosomal subunit protein uS3c (rps3) from Glycine max (Soybean).